Reading from the N-terminus, the 449-residue chain is Tubulin alpha-8 chain (449 aa).

Residues 1-4 (MREC) carry the MREC motif motif. Gln11, Glu71, Ser140, Gly144, Thr145, Thr179, Asn206, and Asn228 together coordinate GTP. Residue Glu71 coordinates Mg(2+). Glu254 is a catalytic residue.

The protein belongs to the tubulin family. As to quaternary structure, dimer of alpha and beta chains. A typical microtubule is a hollow water-filled tube with an outer diameter of 25 nm and an inner diameter of 15 nM. Alpha-beta heterodimers associate head-to-tail to form protofilaments running lengthwise along the microtubule wall with the beta-tubulin subunit facing the microtubule plus end conferring a structural polarity. Microtubules usually have 13 protofilaments but different protofilament numbers can be found in some organisms and specialized cells. Requires Mg(2+) as cofactor. Post-translationally, some glutamate residues at the C-terminus are polyglycylated, resulting in polyglycine chains on the gamma-carboxyl group. Glycylation is mainly limited to tubulin incorporated into axonemes (cilia and flagella) whereas glutamylation is prevalent in neuronal cells, centrioles, axonemes, and the mitotic spindle. Both modifications can coexist on the same protein on adjacent residues, and lowering polyglycylation levels increases polyglutamylation, and reciprocally. Cilia and flagella glycylation is required for their stability and maintenance. Flagella glycylation controls sperm motility. In terms of processing, some glutamate residues at the C-terminus are polyglutamylated, resulting in polyglutamate chains on the gamma-carboxyl group. Polyglutamylation plays a key role in microtubule severing by spastin (SPAST). SPAST preferentially recognizes and acts on microtubules decorated with short polyglutamate tails: severing activity by SPAST increases as the number of glutamates per tubulin rises from one to eight, but decreases beyond this glutamylation threshold. Glutamylation is also involved in cilia motility. The C-terminal phenylalanine residue is cleaved by MATCAP1/KIAA0895L.

It localises to the cytoplasm. The protein resides in the cytoskeleton. The enzyme catalyses GTP + H2O = GDP + phosphate + H(+). Its function is as follows. Tubulin is the major constituent of microtubules, a cylinder consisting of laterally associated linear protofilaments composed of alpha- and beta-tubulin heterodimers. Microtubules grow by the addition of GTP-tubulin dimers to the microtubule end, where a stabilizing cap forms. Below the cap, tubulin dimers are in GDP-bound state, owing to GTPase activity of alpha-tubulin. The protein is Tubulin alpha-8 chain (TUBA8) of Bos taurus (Bovine).